The sequence spans 1627 residues: Pleckstrin homology domain-containing family G member 4B (1627 aa).

6 disordered regions span residues Tyr-211–Arg-349, Leu-381–Val-475, Val-501–Asp-537, Ser-959–Pro-1008, Thr-1049–Leu-1111, and Pro-1124–Ser-1159. The segment covering Gly-241–Ser-251 has biased composition (polar residues). 2 stretches are compositionally biased toward basic and acidic residues: residues Gln-262–Glu-273 and Glu-310–Lys-322. A compositionally biased stretch (gly residues) spans Arg-465–Ala-474. A compositionally biased stretch (basic and acidic residues) spans Pro-975–Arg-985. Residues Ser-1057–Ala-1068 are compositionally biased toward polar residues. The segment covering Arg-1070–Lys-1081 has biased composition (basic residues). Composition is skewed to polar residues over residues Pro-1101–Leu-1111 and Pro-1133–Ser-1144. A DH domain is found at Arg-1161 to Leu-1340. Residues Asn-1352–Trp-1460 enclose the PH domain. Residues Lys-1519–Gln-1558 are disordered. The span at Thr-1521–Asp-1535 shows a compositional bias: polar residues. Over residues Ser-1545–Gln-1558 the composition is skewed to low complexity.

As to quaternary structure, found in a complex with ARHGEF11 and ARHGEF12; binding to ARHGEF11 and ARHGEF12 enhances CDC42 GEF activity of PLEKHG4B, and PLEKHG4B, in turn, inhibits ARHGEF11- and ARHGEF12-mediated RHOA activation. Interacts with ANXA2; this interaction is required for PLEKHG4B localization to cell-cell adhesions.

Its subcellular location is the basal cell membrane. It is found in the cell junction. It localises to the nucleus. The protein resides in the cytoplasm. Guanine nucleotide exchange factor (GEF) which specifically activates small GTPase CDC42 by exchanging bound GDP for free GTP. Plays a role in actin cytoskeletal remodeling in the late stage of cell-cell junction formation by regulating the contractility of actin filaments, which prompts the conversion from 'open' to 'closed' junctions. This is Pleckstrin homology domain-containing family G member 4B from Homo sapiens (Human).